We begin with the raw amino-acid sequence, 156 residues long: Ecotin (156 aa).

The first 19 residues, 1–19 (MKALLIAAGVAALSSTAMA), serve as a signal peptide directing secretion. Cysteine 65 and cysteine 102 form a disulfide bridge.

It belongs to the protease inhibitor I11 (ecotin) family. As to quaternary structure, homodimer.

The protein resides in the periplasm. Its function is as follows. General inhibitor of family S1 serine proteases. The chain is Ecotin from Pseudomonas aeruginosa (strain UCBPP-PA14).